The following is a 593-amino-acid chain: Efflux pump FUBT (593 aa).

The segment at 1-44 (MAIDPQPSSPSLSSETIANDTIGNDNNVNEPSVEPKTQENQHTV) is disordered. The segment covering 9-30 (SPSLSSETIANDTIGNDNNVNE) has biased composition (polar residues). N-linked (GlcNAc...) asparagine glycosylation occurs at Asn19. Transmembrane regions (helical) follow at residues 98–118 (WAFVLLQSLACLATTFASSAY), 135–155 (VATLGISLYVLGFTFGPLIWA), 167–187 (FFFTFMVATAFSAGAAGAGSI), 195–215 (FLTGSIGSAPLSNAPALIADM), 227–247 (MFSGAPFLGPAIGPIAGGFLG), 254–274 (WLHGLMAAFTGVTWIACTVFI), 337–357 (IYISIIYGTMYMCFAAFPIVF), 367–387 (IGGLAFTGIVIGVVLSIISFA), 410–430 (LPPAIMGSLLIPIGLFWFAWT), 438–458 (IVPIIGTVFFAWGLVLVFMAL), 468–488 (IFAASIMAANSALRSLFGAAF), and 503–523 (WASSIPAFLALACVPFPFLFY). Positions 570–593 (THNSHASAAHSHGHRRSLSYTRSV) are disordered.

This sequence belongs to the major facilitator superfamily. DHA1 family. Polyamines/proton antiporter (TC 2.A.1.2.16) subfamily.

It localises to the cell membrane. In terms of biological role, efflux pump involved in export of fusaric acid, a mycotoxin with low to moderate toxicity to animals and humans, but with high phytotoxic properties. Constitutes a self-protecting mechanism of the fungus against critical levels of FSA within the cell. In Fusarium oxysporum (Fusarium vascular wilt), this protein is Efflux pump FUBT.